A 125-amino-acid chain; its full sequence is Holo-[acyl-carrier-protein] synthase (125 aa).

Mg(2+) contacts are provided by Asp-8 and Glu-57.

The protein belongs to the P-Pant transferase superfamily. AcpS family. Mg(2+) serves as cofactor.

It localises to the cytoplasm. It catalyses the reaction apo-[ACP] + CoA = holo-[ACP] + adenosine 3',5'-bisphosphate + H(+). In terms of biological role, transfers the 4'-phosphopantetheine moiety from coenzyme A to a Ser of acyl-carrier-protein. The polypeptide is Holo-[acyl-carrier-protein] synthase (Geotalea daltonii (strain DSM 22248 / JCM 15807 / FRC-32) (Geobacter daltonii)).